A 122-amino-acid chain; its full sequence is Large ribosomal subunit protein uL14 (122 aa).

It belongs to the universal ribosomal protein uL14 family. As to quaternary structure, part of the 50S ribosomal subunit. Forms a cluster with proteins L3 and L19. In the 70S ribosome, L14 and L19 interact and together make contacts with the 16S rRNA in bridges B5 and B8.

Functionally, binds to 23S rRNA. Forms part of two intersubunit bridges in the 70S ribosome. The polypeptide is Large ribosomal subunit protein uL14 (Gluconacetobacter diazotrophicus (strain ATCC 49037 / DSM 5601 / CCUG 37298 / CIP 103539 / LMG 7603 / PAl5)).